A 124-amino-acid polypeptide reads, in one-letter code: Glycine cleavage system H protein (124 aa).

The Lipoyl-binding domain maps to 22–104 (VATVGITEFA…YGAGWLFRVE (83 aa)). An N6-lipoyllysine modification is found at lysine 63.

This sequence belongs to the GcvH family. As to quaternary structure, the glycine cleavage system is composed of four proteins: P, T, L and H. (R)-lipoate serves as cofactor.

In terms of biological role, the glycine cleavage system catalyzes the degradation of glycine. The H protein shuttles the methylamine group of glycine from the P protein to the T protein. The sequence is that of Glycine cleavage system H protein from Beutenbergia cavernae (strain ATCC BAA-8 / DSM 12333 / CCUG 43141 / JCM 11478 / NBRC 16432 / NCIMB 13614 / HKI 0122).